We begin with the raw amino-acid sequence, 129 residues long: MAKLTRKIPKKTKRKFSRGLVHIQVSFNNTIVTITNLKGDVLAWSSAGACGFKGARKGTPFAAQIVAETAARKSFDRGLKQAQVLVKGPGPGRDKALVGLFKAGIQISLIRDITAIPHNGCRPPKKRRL.

It belongs to the universal ribosomal protein uS11 family. As to quaternary structure, part of the 30S ribosomal subunit.

Its subcellular location is the plastid. The protein resides in the chloroplast. This chain is Small ribosomal subunit protein uS11c, found in Pleurastrum terricola (Filamentous green alga).